The primary structure comprises 419 residues: Acyl-[acyl-carrier-protein] hydrolase FATB1, chloroplastic (419 aa).

The transit peptide at 1–50 (MVAAAATSAFFPVPAPGTSPKPGKSGNWPSSLSPTFKPKSIPNGGFQVKA) directs the protein to the chloroplast. Residues 1 to 84 (MVAAAATSAF…DTSSSPPPRA (84 aa)) form a disordered region. The segment covering 61-78 (SAVNLKSGSLNTQEDTSS) has biased composition (polar residues). Residues Asn-315, His-317, and Cys-352 contribute to the active site. The tract at residues 390–419 (SRTEWRPKNAGTNGAISTSTAKTSNGNSVS) is disordered. Residues 399–419 (AGTNGAISTSTAKTSNGNSVS) are compositionally biased toward polar residues.

It belongs to the acyl-ACP thioesterase family.

It localises to the plastid. It is found in the chloroplast. The enzyme catalyses octanoyl-[ACP] + H2O = octanoate + holo-[ACP] + H(+). The catalysed reaction is decanoyl-[ACP] + H2O = decanoate + holo-[ACP] + H(+). Its function is as follows. Plays an essential role in chain termination during de novo fatty acid synthesis. Possesses thioesterase activity for short chain acyl-ACPs. Substrate preference is 8:0 &gt; 10:0. In Cuphea viscosissima (Blue waxweed), this protein is Acyl-[acyl-carrier-protein] hydrolase FATB1, chloroplastic.